A 99-amino-acid polypeptide reads, in one-letter code: Integration host factor subunit alpha (99 aa).

The segment at 52 to 73 (FGNFTLRDKPQRPGRNPKTGEE) is disordered.

The protein belongs to the bacterial histone-like protein family. As to quaternary structure, heterodimer of an alpha and a beta chain.

In terms of biological role, this protein is one of the two subunits of integration host factor, a specific DNA-binding protein that functions in genetic recombination as well as in transcriptional and translational control. The protein is Integration host factor subunit alpha of Legionella pneumophila subsp. pneumophila (strain Philadelphia 1 / ATCC 33152 / DSM 7513).